A 393-amino-acid polypeptide reads, in one-letter code: MTSTHLPATLLLLGSGELGKEVAIAAQRLGCRVVAVDRYANAPAMQVADTAVVIPMTDAEALKQVIREHQPALVIPEIEALAVDALAELEAEGITVIPTARATAITMNRDRIRDLAAGELGLRTARFGYASSAEELSSAAEPLGWPVVVKPVMSSSGKGQSVATNPEELQQAWTAATQGARGSASLVIVEEFLRFEQEITLLTVRQKDGPTLFCPPIGHIQERGDYQCSWQPAELQQSQLLEAQRMARQVTDALGGAGIFGVEFFIASGEVIFSELSPRPHDTGLVTLRGQNLSEFELHLRAVLGLPIPSITSTGAAASRVVLAGADQQGGPVHYRGVAEALAVPESELLLFGKPEARPMRRMGVALASGSSLAEARGRADTAAQAVALEIGG.

N(1)-(5-phospho-beta-D-ribosyl)glycinamide-binding positions include 17–18 and Glu-77; that span reads EL. Residues Arg-109, Lys-150, 155-160, 190-193, and Glu-198 each bind ATP; these read SSGKGQ and EEFL. The ATP-grasp domain occupies 114-304; that stretch reads DLAAGELGLR…EFELHLRAVL (191 aa). The Mg(2+) site is built by Glu-263 and Glu-275. N(1)-(5-phospho-beta-D-ribosyl)glycinamide-binding positions include Asp-282, Lys-354, and 361 to 362; that span reads RR.

Belongs to the PurK/PurT family. Homodimer.

The enzyme catalyses N(1)-(5-phospho-beta-D-ribosyl)glycinamide + formate + ATP = N(2)-formyl-N(1)-(5-phospho-beta-D-ribosyl)glycinamide + ADP + phosphate + H(+). Its pathway is purine metabolism; IMP biosynthesis via de novo pathway; N(2)-formyl-N(1)-(5-phospho-D-ribosyl)glycinamide from N(1)-(5-phospho-D-ribosyl)glycinamide (formate route): step 1/1. In terms of biological role, involved in the de novo purine biosynthesis. Catalyzes the transfer of formate to 5-phospho-ribosyl-glycinamide (GAR), producing 5-phospho-ribosyl-N-formylglycinamide (FGAR). Formate is provided by PurU via hydrolysis of 10-formyl-tetrahydrofolate. This Synechococcus sp. (strain RCC307) protein is Formate-dependent phosphoribosylglycinamide formyltransferase.